The chain runs to 157 residues: Ribosomal RNA large subunit methyltransferase H (157 aa).

S-adenosyl-L-methionine is bound by residues Leu74, Gly106, and 125–130 (LSDMTL).

This sequence belongs to the RNA methyltransferase RlmH family. As to quaternary structure, homodimer.

The protein resides in the cytoplasm. It catalyses the reaction pseudouridine(1915) in 23S rRNA + S-adenosyl-L-methionine = N(3)-methylpseudouridine(1915) in 23S rRNA + S-adenosyl-L-homocysteine + H(+). Specifically methylates the pseudouridine at position 1915 (m3Psi1915) in 23S rRNA. This Desulfovibrio desulfuricans (strain ATCC 27774 / DSM 6949 / MB) protein is Ribosomal RNA large subunit methyltransferase H.